The chain runs to 267 residues: Electron transfer flavoprotein subunit beta (267 aa).

Belongs to the ETF beta-subunit/FixA family. Heterodimer of an alpha and a beta subunit.

Functionally, participates in the electron transfer process during N,N-dimethylglycine (DMG) degradation to sarcosine. The protein is Electron transfer flavoprotein subunit beta of Chromohalobacter salexigens (strain ATCC BAA-138 / DSM 3043 / CIP 106854 / NCIMB 13768 / 1H11).